We begin with the raw amino-acid sequence, 443 residues long: Cyclic AMP receptor 4 (443 aa).

Topologically, residues 1–11 (MKVLQEINLTY) are extracellular. Residue N8 is glycosylated (N-linked (GlcNAc...) asparagine). A helical membrane pass occupies residues 12–32 (SILVIADFSSIFGCLLVLIAF). Over 33–44 (KKLKLLRNHITR) the chain is Cytoplasmic. Residues 45-65 (VIACFCVSSLLKDIISTGLTL) traverse the membrane as a helical segment. Residues 66–89 (SLGPQNEAGSTSFQCYLYAITITY) lie on the Extracellular side of the membrane. Residues 90–110 (GSLACWLWTLCLAFSIYNLIV) traverse the membrane as a helical segment. The Cytoplasmic segment spans residues 111–119 (KREPEPEKY). A helical membrane pass occupies residues 120-140 (EKFYHGVCWTIPLICVIVMLA). Residues 141–161 (KKTIEPVGNWCWISEKYVGYR) are Extracellular-facing. Residues 162-182 (FGLFYGPFFAIWIISAVLVGL) traverse the membrane as a helical segment. Topologically, residues 183 to 208 (TSRYTYSVIRNSVSDNKDKHMTYQFK) are cytoplasmic. The helical transmembrane segment at 209–229 (LINYIIVFLLCWVFAIVNRIL) threads the bilayer. The Extracellular segment spans residues 230-263 (NGLGYYPTLPNILHTYFSVSHGFFASVTFIYNNP). A helical membrane pass occupies residues 264–284 (LMWRYWGSKIFLIFAKFGYFV). The Cytoplasmic portion of the chain corresponds to 285-443 (ELQRRLDRNK…DEREKKDNKF (159 aa)). Disordered regions lie at residues 325-354 (NDISNDNQQQQQQQQTPQQPQQQFQQQQSP) and 396-443 (SFEI…DNKF). The segment covering 332–352 (QQQQQQQQTPQQPQQQFQQQQ) has biased composition (low complexity). Residues 396–410 (SFEITQPSNDLNTIE) show a composition bias toward polar residues. Residues 411–425 (NNNNYNNNNNNNNNN) show a composition bias toward low complexity. Residues 429 to 443 (IEKEKDEREKKDNKF) are compositionally biased toward basic and acidic residues.

The protein belongs to the G-protein coupled receptor 5 family. In terms of processing, C-terminal Ser or Thr residues may be phosphorylated.

Its subcellular location is the membrane. Receptor for cAMP. Regulates axial patterning and cellular differentiation during late development. The activity of this receptor is mediated by G proteins. The protein is Cyclic AMP receptor 4 (carD) of Dictyostelium discoideum (Social amoeba).